The following is a 529-amino-acid chain: Bifunctional purine biosynthesis protein PurH (529 aa).

An MGS-like domain is found at 1–148 (MQQRRPVRRA…KNHKDVAIVV (148 aa)).

Belongs to the PurH family.

The catalysed reaction is (6R)-10-formyltetrahydrofolate + 5-amino-1-(5-phospho-beta-D-ribosyl)imidazole-4-carboxamide = 5-formamido-1-(5-phospho-D-ribosyl)imidazole-4-carboxamide + (6S)-5,6,7,8-tetrahydrofolate. It carries out the reaction IMP + H2O = 5-formamido-1-(5-phospho-D-ribosyl)imidazole-4-carboxamide. Its pathway is purine metabolism; IMP biosynthesis via de novo pathway; 5-formamido-1-(5-phospho-D-ribosyl)imidazole-4-carboxamide from 5-amino-1-(5-phospho-D-ribosyl)imidazole-4-carboxamide (10-formyl THF route): step 1/1. It functions in the pathway purine metabolism; IMP biosynthesis via de novo pathway; IMP from 5-formamido-1-(5-phospho-D-ribosyl)imidazole-4-carboxamide: step 1/1. The chain is Bifunctional purine biosynthesis protein PurH from Salmonella heidelberg (strain SL476).